A 193-amino-acid chain; its full sequence is NADH-quinone oxidoreductase subunit B (193 aa).

C72, C73, C137, and C167 together coordinate [4Fe-4S] cluster.

Belongs to the complex I 20 kDa subunit family. NDH-1 is composed of 14 different subunits. Subunits NuoB, C, D, E, F, and G constitute the peripheral sector of the complex. Requires [4Fe-4S] cluster as cofactor.

Its subcellular location is the cell inner membrane. It carries out the reaction a quinone + NADH + 5 H(+)(in) = a quinol + NAD(+) + 4 H(+)(out). Its function is as follows. NDH-1 shuttles electrons from NADH, via FMN and iron-sulfur (Fe-S) centers, to quinones in the respiratory chain. The immediate electron acceptor for the enzyme in this species is believed to be ubiquinone. Couples the redox reaction to proton translocation (for every two electrons transferred, four hydrogen ions are translocated across the cytoplasmic membrane), and thus conserves the redox energy in a proton gradient. The protein is NADH-quinone oxidoreductase subunit B of Bartonella quintana (strain Toulouse) (Rochalimaea quintana).